Consider the following 453-residue polypeptide: Allantoinase (453 aa).

Residues His-59, His-61, Lys-146, His-186, His-242, and Asp-315 each contribute to the Zn(2+) site. Position 146 is an N6-carboxylysine (Lys-146).

Belongs to the metallo-dependent hydrolases superfamily. Allantoinase family. In terms of assembly, homotetramer. Requires Zn(2+) as cofactor. Post-translationally, carboxylation allows a single lysine to coordinate two zinc ions.

The enzyme catalyses (S)-allantoin + H2O = allantoate + H(+). Its pathway is nitrogen metabolism; (S)-allantoin degradation; allantoate from (S)-allantoin: step 1/1. Functionally, catalyzes the conversion of allantoin (5-ureidohydantoin) to allantoic acid by hydrolytic cleavage of the five-member hydantoin ring. The chain is Allantoinase from Escherichia coli (strain SMS-3-5 / SECEC).